The sequence spans 458 residues: MKNASTVSEDTASNQEPTLHRGLHNRHIQLIALGGAIGTGLFLGIGPAIQMAGPAVLLGYGVAGIIAFLIMRQLGEMVVEEPVSGSFAHFAYKYWGPFAGFLSGWNYWVMFVLVGMAELTAAGIYMQYWFPDVPTWIWAAAFFIIINAVNLVNVRLYGETEFWFALIKVLAIIGMIGFGLWLLFSGHGGEKASIDNLWRYGGFFATGWNGLILSLAVIMFSFGGLELIGITAAEARDPEKSIPKAVNQVVYRILLFYIGSLVVLLALYPWVEVKSNSSPFVMIFHNLDSNVVASALNFVILVASLSVYNSGVYSNSRMLFGLSVQGNAPKFLTRVSRRGVPINSLMLSGAITSLVVLINYLLPQKAFGLLMALVVATLLLNWIMICLAHLRFRAAMRRQGRETQFKALLYPFGNYLCIAFLGMILLLMCTMDDMRLSAILLPVWIVFLFMAFKTLRRK.

Residues Met-1–His-27 are Cytoplasmic-facing. Residues Ile-28 to Ala-48 traverse the membrane as a helical segment. At Ile-49–Gln-50 the chain is on the periplasmic side. Residues Met-51–Met-71 form a helical membrane-spanning segment. The Cytoplasmic segment spans residues Arg-72–Trp-105. A helical membrane pass occupies residues Asn-106–Met-126. The Periplasmic portion of the chain corresponds to Gln-127 to Asp-132. A helical transmembrane segment spans residues Val-133 to Asn-153. Topologically, residues Val-154 to Thr-160 are cytoplasmic. The chain crosses the membrane as a helical span at residues Glu-161–Trp-181. At Leu-182 to Asn-196 the chain is on the periplasmic side. The chain crosses the membrane as a helical span at residues Leu-197 to Val-217. Residues Ile-218 to Val-250 are Cytoplasmic-facing. A helical transmembrane segment spans residues Tyr-251 to Val-271. The Periplasmic segment spans residues Glu-272–Asp-288. A helical membrane pass occupies residues Ser-289 to Asn-309. The Cytoplasmic portion of the chain corresponds to Ser-310 to Pro-341. Residues Ile-342 to Leu-362 form a helical membrane-spanning segment. The Periplasmic segment spans residues Pro-363–Phe-367. A helical transmembrane segment spans residues Gly-368–Ala-388. Residues His-389–Pro-411 are Cytoplasmic-facing. The helical transmembrane segment at Phe-412–Asp-432 threads the bilayer. Over Asp-433–Met-434 the chain is Periplasmic. A helical membrane pass occupies residues Arg-435–Leu-455. At Arg-456–Lys-458 the chain is on the cytoplasmic side.

It belongs to the amino acid-polyamine-organocation (APC) superfamily. Amino acid transporter (AAT) (TC 2.A.3.1) family.

It is found in the cell inner membrane. The catalysed reaction is L-phenylalanine(in) + H(+)(in) = L-phenylalanine(out) + H(+)(out). In terms of biological role, permease that is involved in the active transport across the cytoplasmic membrane of phenylalanine. Can also transport tyrosine, but not tryptophan. This chain is Phenylalanine-specific permease, found in Escherichia coli (strain K12).